Here is a 530-residue protein sequence, read N- to C-terminus: Probable glycerol-3-phosphate acyltransferase 2 (530 aa).

A run of 3 helical transmembrane segments spans residues 70–90 (YFMV…LLVL), 93–113 (FISL…SFFG), and 275–295 (LVLF…LVFG). An HXXXXD motif motif is present at residues 339-344 (HRTLLD).

The protein belongs to the GPAT/DAPAT family. As to expression, weakly or not expressed in roots, leaves, seedlings, developing siliques and flower buds.

Its subcellular location is the membrane. It carries out the reaction sn-glycerol 3-phosphate + an acyl-CoA = a 1-acyl-sn-glycero-3-phosphate + CoA. The protein operates within phospholipid metabolism; CDP-diacylglycerol biosynthesis; CDP-diacylglycerol from sn-glycerol 3-phosphate: step 1/3. Esterifies acyl-group from acyl-ACP to the sn-1 position of glycerol-3-phosphate, an essential step in glycerolipid biosynthesis. The polypeptide is Probable glycerol-3-phosphate acyltransferase 2 (GPAT2) (Arabidopsis thaliana (Mouse-ear cress)).